We begin with the raw amino-acid sequence, 680 residues long: Methionine--tRNA ligase (680 aa).

The 'HIGH' region signature appears at 15 to 25; the sequence is PYANGPVHIGH. Positions 147, 150, 160, and 163 each coordinate Zn(2+). Residues 332–336 carry the 'KMSKS' region motif; that stretch reads KISTS. Residue threonine 335 participates in ATP binding. Residues 579-680 form the tRNA-binding domain; the sequence is DFLKLDIRVG…AEVAPGSQVK (102 aa).

This sequence belongs to the class-I aminoacyl-tRNA synthetase family. MetG type 1 subfamily. Homodimer. Requires Zn(2+) as cofactor.

It localises to the cytoplasm. It carries out the reaction tRNA(Met) + L-methionine + ATP = L-methionyl-tRNA(Met) + AMP + diphosphate. Functionally, is required not only for elongation of protein synthesis but also for the initiation of all mRNA translation through initiator tRNA(fMet) aminoacylation. This Porphyromonas gingivalis (strain ATCC 33277 / DSM 20709 / CIP 103683 / JCM 12257 / NCTC 11834 / 2561) protein is Methionine--tRNA ligase.